Consider the following 191-residue polypeptide: GTP cyclohydrolase 1 (191 aa).

Zn(2+)-binding residues include cysteine 80, histidine 83, and cysteine 151.

The protein belongs to the GTP cyclohydrolase I family. Toroid-shaped homodecamer, composed of two pentamers of five dimers.

The catalysed reaction is GTP + H2O = 7,8-dihydroneopterin 3'-triphosphate + formate + H(+). The protein operates within cofactor biosynthesis; 7,8-dihydroneopterin triphosphate biosynthesis; 7,8-dihydroneopterin triphosphate from GTP: step 1/1. This chain is GTP cyclohydrolase 1, found in Leifsonia xyli subsp. xyli (strain CTCB07).